A 208-amino-acid polypeptide reads, in one-letter code: Putative archaetidylserine decarboxylase proenzyme (208 aa).

Serine 171 acts as the Schiff-base intermediate with substrate; via pyruvic acid in catalysis. Serine 171 bears the Pyruvic acid (Ser); by autocatalysis mark.

This sequence belongs to the phosphatidylserine decarboxylase family. PSD-A subfamily. As to quaternary structure, heterodimer of a large membrane-associated beta subunit and a small pyruvoyl-containing alpha subunit. It depends on pyruvate as a cofactor. Is synthesized initially as an inactive proenzyme. Formation of the active enzyme involves a self-maturation process in which the active site pyruvoyl group is generated from an internal serine residue via an autocatalytic post-translational modification. Two non-identical subunits are generated from the proenzyme in this reaction, and the pyruvate is formed at the N-terminus of the alpha chain, which is derived from the carboxyl end of the proenzyme. The post-translation cleavage follows an unusual pathway, termed non-hydrolytic serinolysis, in which the side chain hydroxyl group of the serine supplies its oxygen atom to form the C-terminus of the beta chain, while the remainder of the serine residue undergoes an oxidative deamination to produce ammonia and the pyruvoyl prosthetic group on the alpha chain.

It localises to the cell membrane. The enzyme catalyses archaetidylserine + H(+) = archaetidylethanolamine + CO2. Functionally, catalyzes the formation of archaetidylethanolamine (PtdEtn) from archaetidylserine (PtdSer). In Methanococcoides burtonii (strain DSM 6242 / NBRC 107633 / OCM 468 / ACE-M), this protein is Putative archaetidylserine decarboxylase proenzyme.